The following is a 265-amino-acid chain: Chalcone synthase (265 aa).

Cys-40 is a catalytic residue.

The protein belongs to the thiolase-like superfamily. Chalcone/stilbene synthases family.

It catalyses the reaction (E)-4-coumaroyl-CoA + 3 malonyl-CoA + 3 H(+) = 2',4,4',6'-tetrahydroxychalcone + 3 CO2 + 4 CoA. The protein operates within secondary metabolite biosynthesis; flavonoid biosynthesis. Its function is as follows. The primary product of this enzyme is 4,2',4',6'-tetrahydroxychalcone (also termed naringenin-chalcone or chalcone) which can under specific conditions spontaneously isomerize into naringenin. This Medicago sativa (Alfalfa) protein is Chalcone synthase (CHSII).